A 292-amino-acid polypeptide reads, in one-letter code: Ribosomal protein L11 methyltransferase (292 aa).

S-adenosyl-L-methionine-binding residues include threonine 136, glycine 159, aspartate 181, and asparagine 228.

It belongs to the methyltransferase superfamily. PrmA family.

Its subcellular location is the cytoplasm. It carries out the reaction L-lysyl-[protein] + 3 S-adenosyl-L-methionine = N(6),N(6),N(6)-trimethyl-L-lysyl-[protein] + 3 S-adenosyl-L-homocysteine + 3 H(+). Its function is as follows. Methylates ribosomal protein L11. The sequence is that of Ribosomal protein L11 methyltransferase from Agrobacterium fabrum (strain C58 / ATCC 33970) (Agrobacterium tumefaciens (strain C58)).